The primary structure comprises 187 residues: Oligoribonuclease (187 aa).

The 164-residue stretch at 7-170 (LCWLDMEMTG…DDILESIEEM (164 aa)) folds into the Exonuclease domain. The active site involves Tyr-128.

Belongs to the oligoribonuclease family.

It localises to the cytoplasm. Functionally, 3'-to-5' exoribonuclease specific for small oligoribonucleotides. The protein is Oligoribonuclease of Neisseria meningitidis serogroup B (strain ATCC BAA-335 / MC58).